The sequence spans 362 residues: Protein U8 (362 aa).

It belongs to the herpesviridae US22 family.

The protein is Protein U8 (U8) of Human herpesvirus 7 (strain JI) (HHV-7).